A 158-amino-acid chain; its full sequence is MLSPKRTKYRKQQRGRMKGKATRGNRINFGEYGLVALEPAWITARQIEASRRAMARYVRRGGQIWIRIFPDKPVTQRPAETRMGSGKGNPEYWVCVVKPGRILFEMGGVPEATAREAMRLAAQKLPIKVKFVTKANFEEPEPVQKAAPETTEVAASAI.

Residues 1–22 (MLSPKRTKYRKQQRGRMKGKAT) form a disordered region.

This sequence belongs to the universal ribosomal protein uL16 family. Part of the 50S ribosomal subunit.

Its function is as follows. Binds 23S rRNA and is also seen to make contacts with the A and possibly P site tRNAs. In Synechococcus sp. (strain JA-3-3Ab) (Cyanobacteria bacterium Yellowstone A-Prime), this protein is Large ribosomal subunit protein uL16.